The sequence spans 237 residues: MADDWEFAADSKVVVKPNAANNINKWEGEDDDEDVKESWEDEEEKKDEEKPTKTEAPAKTKPNKVLKAKLLEQECLEKEEEAKRLANMSTEEKLAEKLRLQKIQEESDLKSALETFGLTSIDGGLDSFNPQSNEEFKEFGATLSWKIAQYKESPHFPQFIEDLVQALCVNLSTADLKKVKMSVEVLHSEKLKMEKVSVKNKGAAKNRGKATLRTENDDIDVYQKYGDDFTDDYDDFM.

A disordered region spans residues 20–64; that stretch reads ANNINKWEGEDDDEDVKESWEDEEEKKDEEKPTKTEAPAKTKPNK. Positions 28–46 are enriched in acidic residues; the sequence is GEDDDEDVKESWEDEEEKK. Basic and acidic residues predominate over residues 47 to 58; the sequence is DEEKPTKTEAPA. The stretch at 63–115 forms a coiled coil; that stretch reads NKVLKAKLLEQECLEKEEEAKRLANMSTEEKLAEKLRLQKIQEESDLKSALET.

The protein belongs to the eIF-3 subunit J family. In terms of assembly, component of the eukaryotic translation initiation factor 3 (eIF-3) complex. The eIF-3 complex interacts with pix.

It localises to the cytoplasm. Its function is as follows. Component of the eukaryotic translation initiation factor 3 (eIF-3) complex, which is involved in protein synthesis of a specialized repertoire of mRNAs and, together with other initiation factors, stimulates binding of mRNA and methionyl-tRNAi to the 40S ribosome. The eIF-3 complex specifically targets and initiates translation of a subset of mRNAs involved in cell proliferation. This Drosophila grimshawi (Hawaiian fruit fly) protein is Eukaryotic translation initiation factor 3 subunit J.